The primary structure comprises 332 residues: GTP 3',8-cyclase (332 aa).

A Radical SAM core domain is found at 9–220 (RFARKVDYLR…DQVRERIAER (212 aa)). Arg-18 provides a ligand contact to GTP. Residues Cys-25 and Cys-29 each contribute to the [4Fe-4S] cluster site. Tyr-31 is a binding site for S-adenosyl-L-methionine. Cys-32 is a binding site for [4Fe-4S] cluster. Arg-67 contributes to the GTP binding site. Residue Gly-71 coordinates S-adenosyl-L-methionine. Thr-98 provides a ligand contact to GTP. S-adenosyl-L-methionine is bound at residue Ser-122. Residue Lys-159 participates in GTP binding. Met-193 is a binding site for S-adenosyl-L-methionine. The [4Fe-4S] cluster site is built by Cys-258 and Cys-261. Position 263–265 (263–265 (RVR)) interacts with GTP. Position 275 (Cys-275) interacts with [4Fe-4S] cluster.

The protein belongs to the radical SAM superfamily. MoaA family. In terms of assembly, monomer and homodimer. It depends on [4Fe-4S] cluster as a cofactor.

It catalyses the reaction GTP + AH2 + S-adenosyl-L-methionine = (8S)-3',8-cyclo-7,8-dihydroguanosine 5'-triphosphate + 5'-deoxyadenosine + L-methionine + A + H(+). It participates in cofactor biosynthesis; molybdopterin biosynthesis. Catalyzes the cyclization of GTP to (8S)-3',8-cyclo-7,8-dihydroguanosine 5'-triphosphate. The protein is GTP 3',8-cyclase of Pseudomonas savastanoi pv. phaseolicola (strain 1448A / Race 6) (Pseudomonas syringae pv. phaseolicola (strain 1448A / Race 6)).